The chain runs to 455 residues: D-arabinitol 4-dehydrogenase (455 aa).

Belongs to the mannitol dehydrogenase family. In terms of assembly, monomer.

It carries out the reaction D-arabinitol + NAD(+) = D-xylulose + NADH + H(+). It participates in carbohydrate metabolism; D-arabinitol metabolism. This Klebsiella pneumoniae protein is D-arabinitol 4-dehydrogenase (dalD).